The chain runs to 750 residues: Catalase A (750 aa).

The interval 30–49 (ERDTADAHTQQPLTTDHGVR) is disordered. Residues H93 and N166 contribute to the active site. Residue Y380 participates in heme binding.

Belongs to the catalase family. Requires heme as cofactor.

It localises to the peroxisome matrix. The enzyme catalyses 2 H2O2 = O2 + 2 H2O. Its function is as follows. Catalyzes the degradation of hydrogen peroxide (H(2)O(2)) generated by peroxisomal oxidases to water and oxygen, thereby protecting cells from the toxic effects of hydrogen peroxide. The protein is Catalase A (catA) of Aspergillus fumigatus (strain ATCC MYA-4609 / CBS 101355 / FGSC A1100 / Af293) (Neosartorya fumigata).